The chain runs to 592 residues: Sodium- and chloride-dependent transporter XTRP3 (592 aa).

The Cytoplasmic segment spans residues 1-5 (MEKAR). A helical transmembrane segment spans residues 6–26 (PLWANSLQFVFACISYAVGLG). The Extracellular portion of the chain corresponds to 27 to 42 (NVWRFPYLCQMYGGGS). Residues 43–63 (FLVPYIIMLIVEGMPLLYLEL) form a helical membrane-spanning segment. Residues 64-79 (AVGQRMRQGSIGAWRT) lie on the Cytoplasmic side of the membrane. The chain crosses the membrane as a helical span at residues 80–100 (ISPYLSGVGVASVVVSFFLSM). The Extracellular segment spans residues 101–165 (YYNVINAWAF…ISPSLQENGG (65 aa)). An N-linked (GlcNAc...) asparagine glycan is attached at Asn131. A helical transmembrane segment spans residues 166-186 (VQWEPALCLLLAWLVVYLCIL). Over 187–194 (RGTESTGK) the chain is Cytoplasmic. Residues 195–215 (VVYFTASLPYCVLIIYLIRGL) form a helical membrane-spanning segment. Residues 216 to 241 (TLHGATNGLMYMFTPKIEQLANPKAW) are Extracellular-facing. A helical membrane pass occupies residues 242–262 (INAATQIFFSLGLGFGSLIAF). Topologically, residues 263 to 276 (ASYNEPSNNCQKHA) are cytoplasmic. The helical transmembrane segment at 277-297 (IIVSLINSFTSIFASIVTFSI) threads the bilayer. At 298-389 (YGFKATFNYE…EAIKNMEVSQ (92 aa)) the chain is on the extracellular side. Asn357 carries N-linked (GlcNAc...) asparagine glycosylation. Residues 390–410 (LWSVLYFFMLLMLGIGSMLGN) traverse the membrane as a helical segment. Residues 411-431 (TAAILTPLTDSKIISSHLPKE) lie on the Cytoplasmic side of the membrane. The chain crosses the membrane as a helical span at residues 432 to 452 (AISGLVCLVNCAIGMVFTMEA). The Extracellular segment spans residues 453-465 (GNYWFDIFNDYAA). Residues 466–486 (TLSLLLIVLVETIAVCYVYGL) traverse the membrane as a helical segment. The Cytoplasmic segment spans residues 487 to 504 (RRFESDLKAMTGRAVSWY). The helical transmembrane segment at 505 to 525 (WKVMWAGVSPLLIVSLFVFYL) threads the bilayer. Topologically, residues 526-554 (SDYILTGTLKYQAWDASQGQLVTKDYPAY) are extracellular. Residues 555 to 575 (ALAVIGLLVASSTMCIPLAAL) form a helical membrane-spanning segment. Residues 576–592 (GTFVQRRLKRGDADPVA) lie on the Cytoplasmic side of the membrane.

Belongs to the sodium:neurotransmitter symporter (SNF) (TC 2.A.22) family. SLC6A20 subfamily. As to expression, kidney and small intestine. Expressed in the S3 segment of the proximal tubule. Expressed in neurons.

The protein localises to the apical cell membrane. The enzyme catalyses L-proline(out) + chloride(out) + 2 Na(+)(out) = L-proline(in) + chloride(in) + 2 Na(+)(in). The catalysed reaction is L-pipecolate(out) + chloride(out) + 2 Na(+)(out) = L-pipecolate(in) + chloride(in) + 2 Na(+)(in). It catalyses the reaction sarcosine(out) + chloride(out) + 2 Na(+)(out) = sarcosine(in) + chloride(in) + 2 Na(+)(in). It carries out the reaction N-methyl-L-proline(out) + chloride(out) + 2 Na(+)(out) = N-methyl-L-proline(in) + chloride(in) + 2 Na(+)(in). The enzyme catalyses 2-methyl-2-(methylamino)propanoate(out) + chloride(out) + 2 Na(+)(out) = 2-methyl-2-(methylamino)propanoate(in) + chloride(in) + 2 Na(+)(in). The catalysed reaction is glycine betaine(out) + chloride(out) + 2 Na(+)(out) = glycine betaine(in) + chloride(in) + 2 Na(+)(in). It catalyses the reaction glycine(out) + chloride(out) + 2 Na(+)(out) = glycine(in) + chloride(in) + 2 Na(+)(in). Its function is as follows. Mediates the Na(+)- and Cl(-)-dependent uptake of imino acids such as L-proline, N-methyl-L-proline and pipecolate as well as N-methylated amino acids. Also transports glycine, regulates proline and glycine homeostasis in the brain playing a role in the modulation of NMDAR currents. This Homo sapiens (Human) protein is Sodium- and chloride-dependent transporter XTRP3.